The sequence spans 368 residues: Glutamate 5-kinase (368 aa).

Position 9 (Lys-9) interacts with ATP. Substrate is bound by residues Ser-49, Asp-136, and Asn-148. ATP contacts are provided by residues 168–169 (TD) and 210–216 (TGGMMTK). The region spanning 275–353 (AGIITIDDGA…ADIENVLGYE (79 aa)) is the PUA domain.

The protein belongs to the glutamate 5-kinase family.

It localises to the cytoplasm. The catalysed reaction is L-glutamate + ATP = L-glutamyl 5-phosphate + ADP. It functions in the pathway amino-acid biosynthesis; L-proline biosynthesis; L-glutamate 5-semialdehyde from L-glutamate: step 1/2. Functionally, catalyzes the transfer of a phosphate group to glutamate to form L-glutamate 5-phosphate. The polypeptide is Glutamate 5-kinase (Haemophilus influenzae (strain 86-028NP)).